The chain runs to 548 residues: Natural resistance-associated macrophage protein 1 (548 aa).

The segment at 1–38 (MSGDTGPPKQGGTRYGSISSPPSPEPQQAPPGGTYLSE) is disordered. Residues 1-55 (MSGDTGPPKQGGTRYGSISSPPSPEPQQAPPGGTYLSEKIPIPDTESGTFSLRKL) are Cytoplasmic-facing. A helical transmembrane segment spans residues 56 to 73 (WAFTGPGFLMSIAFLDPG). The Extracellular portion of the chain corresponds to 74 to 82 (NIESDLQAG). Residues 83-102 (AVAGFKLLWVLLWATVLGLL) form a helical membrane-spanning segment. The Cytoplasmic portion of the chain corresponds to 103 to 139 (CQRLAARLGVVTGKDLGEVCHLYYPKVPRILLWLTIE). Residues 140–160 (LAIVGSDMQEVIGTAIAFSLL) traverse the membrane as a helical segment. Topologically, residues 161-164 (SAGR) are extracellular. The helical transmembrane segment at 165-184 (IPLWGGVLITVVDTFFFLFL) threads the bilayer. Residues 185–193 (DNYGLRKLE) are Cytoplasmic-facing. Residues 194–214 (AFFGFLITIMALTFGYEYVVA) traverse the membrane as a helical segment. Over 215 to 237 (QPAQGALLQGLFLPSCPGCGQPE) the chain is Extracellular. A helical transmembrane segment spans residues 238-256 (LLQAVGIIGAIIMPHNIYL). Over 257-284 (HSSLVKSREVDRSRRADIREANMYFLIE) the chain is Cytoplasmic. The chain crosses the membrane as a helical span at residues 285–304 (ATIALSVSFLINLFVMAVFG). Over 305–346 (QAFYKQTNQAAFNICADSSLHDYAPIFPRNNLTVAVDIYQGG) the chain is Extracellular. Residue asparagine 335 is glycosylated (N-linked (GlcNAc...) asparagine). A helical transmembrane segment spans residues 347–366 (VILGCLFGPPALYIWAVGLL). Residues 367-397 (AAGQSSTMTGTYAGQFVMEGFLKLRWSRFAR) lie on the Cytoplasmic side of the membrane. The chain crosses the membrane as a helical span at residues 398–415 (VLLTRSCAILPTVLLAVF). Residues 416–426 (RDLRDLSGLND) lie on the Extracellular side of the membrane. The helical transmembrane segment at 427-447 (LLNVLQSLLLPFAVLPILTFT) threads the bilayer. At 448-463 (SMPALMQEFANGLVSK) the chain is on the cytoplasmic side. A helical membrane pass occupies residues 464–485 (VITSSIMVLVCAVNLYFVISYL). The Extracellular segment spans residues 486-493 (PSLPHPAY). Residues 494–513 (FSLVALLAAAYLGLTTYLVW) traverse the membrane as a helical segment. Residues 514 to 548 (TCLITQGATLLAHSSHQRFLYGLPEEDQEKGRTSG) lie on the Cytoplasmic side of the membrane.

The protein belongs to the NRAMP family.

The protein resides in the late endosome membrane. The protein localises to the lysosome membrane. It catalyses the reaction Zn(2+)(in) + H(+)(out) = Zn(2+)(out) + H(+)(in). The catalysed reaction is Fe(2+)(in) + H(+)(out) = Fe(2+)(out) + H(+)(in). The enzyme catalyses Mn(2+)(in) + H(+)(out) = Mn(2+)(out) + H(+)(in). Macrophage-specific antiporter that fluxes metal ions in either direction against a proton gradient. Localized to late endosomal lysosomal membranes, delivers bivalent cations from the cytosol into these acidic compartments where they may directly affect antimicrobial activity. Involved in iron metabolism and host natural resistance to infection with intracellular parasites. Pathogen resistance involves sequestration of Fe(2+) and Mn(2+), cofactors of both prokaryotic and eukaryotic catalases and superoxide dismutases, not only to protect the macrophage against its own generation of reactive oxygen species, but to deny the cations to the pathogen for synthesis of its protective enzymes. The sequence is that of Natural resistance-associated macrophage protein 1 (SLC11A1) from Bos taurus (Bovine).